The chain runs to 758 residues: Phosphoribosylformylglycinamidine synthase subunit PurL (758 aa).

Histidine 57 is an active-site residue. Positions 60 and 104 each coordinate ATP. Glutamate 106 contributes to the Mg(2+) binding site. Residues 107–110 and arginine 129 contribute to the substrate site; that span reads SHNH. The active-site Proton acceptor is histidine 108. Mg(2+) is bound at residue aspartate 130. Glutamine 254 lines the substrate pocket. Mg(2+) is bound at residue aspartate 282. Residue 326-328 participates in substrate binding; it reads ESQ. Residues asparagine 509 and glycine 546 each contribute to the ATP site. Mg(2+) is bound at residue asparagine 547. Serine 549 provides a ligand contact to substrate.

The protein belongs to the FGAMS family. Monomer. Part of the FGAM synthase complex composed of 1 PurL, 1 PurQ and 2 PurS subunits.

Its subcellular location is the cytoplasm. The catalysed reaction is N(2)-formyl-N(1)-(5-phospho-beta-D-ribosyl)glycinamide + L-glutamine + ATP + H2O = 2-formamido-N(1)-(5-O-phospho-beta-D-ribosyl)acetamidine + L-glutamate + ADP + phosphate + H(+). Its pathway is purine metabolism; IMP biosynthesis via de novo pathway; 5-amino-1-(5-phospho-D-ribosyl)imidazole from N(2)-formyl-N(1)-(5-phospho-D-ribosyl)glycinamide: step 1/2. Functionally, part of the phosphoribosylformylglycinamidine synthase complex involved in the purines biosynthetic pathway. Catalyzes the ATP-dependent conversion of formylglycinamide ribonucleotide (FGAR) and glutamine to yield formylglycinamidine ribonucleotide (FGAM) and glutamate. The FGAM synthase complex is composed of three subunits. PurQ produces an ammonia molecule by converting glutamine to glutamate. PurL transfers the ammonia molecule to FGAR to form FGAM in an ATP-dependent manner. PurS interacts with PurQ and PurL and is thought to assist in the transfer of the ammonia molecule from PurQ to PurL. The protein is Phosphoribosylformylglycinamidine synthase subunit PurL of Corynebacterium ammoniagenes (Brevibacterium ammoniagenes).